Consider the following 708-residue polypeptide: MEGIKQTFQRCKAQNRAALVTYVTAGFPHPEQTPDILLAMEKGGADVIELGVPFTDPIADGPTIQTANTIALQHGVTLQSTLQMVRDARQRGLKAPVMLMGYYNPLLSYGEERLLNDCKEAGVNGFIIVDLPPEEAVSFRQLCTRGGLSYVPLIAPATSDARMRVLCQLADSFIYVVSRQGVTGASGTLNANLPELLARVKKYSGNKPAAVGFGVSTHDHFTQVGAIADGVVVGSMIITTIQKAAKGEEVKAVQEYCSYLCGRNFEQSAHELNMGEALEAAKEPVGTATVDGVITEADIDAQLAALHGTIPKRFGEFGGQYVPEALMDCLSELEEGFNKIKDDPAFWEEYRSYYPWMGRPGQLHKAERLTEYAGGANIWLKREDLNHTGSHKINNALGQLLLARRLGKKKIIAETGAGQHGVATATVCAKFGMECTVFMGAEDVRRQALNVFRMKLLGAKVVAVEAGSRTLRDAVNEALRYWVVNLADTHYIIGSAIGPHPFPTIVRTFQSVIGNETKQQMLEKRGKLPDAVVACVGGGSNAVGMFYPFSNDPSVKLLGVEAGGDGVDTPRHSATLTAGSKGVLHGVRTYILQNQYGQIEDTHSISAGLDYPGVGPELSNWKDTERAKFVAATDAQAFEGFRLMSQLEGIIPALESSHGIWGALELAKTMKPDEDVVICLSGRGDKDVQSVADELPIIGPKIGWDLRF.

Positions 1-305 (MEGIKQTFQR…EADIDAQLAA (305 aa)) are tryptophan synthase alpha chain. Residues Glu-49 and Asp-60 each act as proton acceptor in the active site. The tryptophan synthase beta chain stretch occupies residues 306 to 708 (LHGTIPKRFG…GPKIGWDLRF (403 aa)). Position 392 is an N6-(pyridoxal phosphate)lysine (Lys-392).

This sequence in the N-terminal section; belongs to the TrpA family. It in the C-terminal section; belongs to the TrpB family. The cofactor is pyridoxal 5'-phosphate.

It catalyses the reaction (1S,2R)-1-C-(indol-3-yl)glycerol 3-phosphate + L-serine = D-glyceraldehyde 3-phosphate + L-tryptophan + H2O. It participates in amino-acid biosynthesis; L-tryptophan biosynthesis; L-tryptophan from chorismate: step 5/5. The sequence is that of Tryptophan synthase (trp-3) from Neurospora crassa (strain ATCC 24698 / 74-OR23-1A / CBS 708.71 / DSM 1257 / FGSC 987).